The primary structure comprises 218 residues: MTNKTLDLSVYFIAGAQNFSECSLDGATQKIALIIKSGVTVYQFRDKGTIYKEQKQRLSIAQKLQKVSEEAGVSFIVNDDVELARELNADGIHIGQTDESVSKVREKVGQEMWLGLSVTKADELKTAQSSGADYLGIGPIYPTNSKNDAAKPIGIKDLRLMLLENQLPIVGIGGITQDSLTELSAIGLDGLAVISLLTEAENPKKVAQMIRQKITKNG.

4-amino-2-methyl-5-(diphosphooxymethyl)pyrimidine-binding positions include glutamine 43–lysine 47 and asparagine 78. Mg(2+) is bound by residues aspartate 79 and aspartate 98. Serine 117 serves as a coordination point for 4-amino-2-methyl-5-(diphosphooxymethyl)pyrimidine. Residue threonine 143 to serine 145 participates in 2-[(2R,5Z)-2-carboxy-4-methylthiazol-5(2H)-ylidene]ethyl phosphate binding. Residue lysine 146 participates in 4-amino-2-methyl-5-(diphosphooxymethyl)pyrimidine binding. Residues glycine 174 and isoleucine 194–serine 195 contribute to the 2-[(2R,5Z)-2-carboxy-4-methylthiazol-5(2H)-ylidene]ethyl phosphate site.

It belongs to the thiamine-phosphate synthase family. It depends on Mg(2+) as a cofactor.

The enzyme catalyses 2-[(2R,5Z)-2-carboxy-4-methylthiazol-5(2H)-ylidene]ethyl phosphate + 4-amino-2-methyl-5-(diphosphooxymethyl)pyrimidine + 2 H(+) = thiamine phosphate + CO2 + diphosphate. It carries out the reaction 2-(2-carboxy-4-methylthiazol-5-yl)ethyl phosphate + 4-amino-2-methyl-5-(diphosphooxymethyl)pyrimidine + 2 H(+) = thiamine phosphate + CO2 + diphosphate. It catalyses the reaction 4-methyl-5-(2-phosphooxyethyl)-thiazole + 4-amino-2-methyl-5-(diphosphooxymethyl)pyrimidine + H(+) = thiamine phosphate + diphosphate. The protein operates within cofactor biosynthesis; thiamine diphosphate biosynthesis; thiamine phosphate from 4-amino-2-methyl-5-diphosphomethylpyrimidine and 4-methyl-5-(2-phosphoethyl)-thiazole: step 1/1. Condenses 4-methyl-5-(beta-hydroxyethyl)thiazole monophosphate (THZ-P) and 2-methyl-4-amino-5-hydroxymethyl pyrimidine pyrophosphate (HMP-PP) to form thiamine monophosphate (TMP). This is Thiamine-phosphate synthase from Lactococcus lactis subsp. cremoris (strain SK11).